A 225-amino-acid polypeptide reads, in one-letter code: Glutathione S-transferase Mu 3 (225 aa).

One can recognise a GST N-terminal domain in the interval 5-92 (SSMVLGYWDI…YIARKHNMCG (88 aa)). Glutathione-binding positions include 11–12 (YW), 50–54 (WLDVK), and 63–64 (NL). Lys54 is covalently cross-linked (Glycyl lysine isopeptide (Lys-Gly) (interchain with G-Cter in SUMO2)). A Glycyl lysine isopeptide (Lys-Gly) (interchain with G-Cter in SUMO2) cross-link involves residue Lys73. Residue 76 to 77 (QS) participates in glutathione binding. Positions 94–212 (TEEEKIRVDI…QSDQFCKMPI (119 aa)) constitute a GST C-terminal domain. Tyr120 lines the substrate pocket.

This sequence belongs to the GST superfamily. Mu family. As to quaternary structure, homodimer. In terms of processing, the N-terminus is blocked. In terms of tissue distribution, testis and brain.

It is found in the cytoplasm. It catalyses the reaction RX + glutathione = an S-substituted glutathione + a halide anion + H(+). Functionally, conjugation of reduced glutathione to a wide number of exogenous and endogenous hydrophobic electrophiles. May govern uptake and detoxification of both endogenous compounds and xenobiotics at the testis and brain blood barriers. The chain is Glutathione S-transferase Mu 3 (GSTM3) from Homo sapiens (Human).